The sequence spans 318 residues: Magnetosome protein MamM (318 aa).

A transmembrane domain (TMD) region spans residues 1–210 (MRKSGCTVCS…FMDAYRGLMD (210 aa)). A run of 4 helical transmembrane segments spans residues 13-33 (IGWVGLAVNTVLMVMKAFVGL), 39-59 (AMLADAMYSLKDMLNALMVVI), 81-101 (FILSMVVSVVFIGLTGYLLVH), and 117-137 (LIVLWAALVSVGVNVAMYFYS). A C-terminal domain (CTD) region spans residues 211–318 (HTAGEAVQNR…DEVMLSKVDN (108 aa)). Fe cation is bound by residues Asp-249, His-264, His-285, and Glu-289.

Belongs to the cation diffusion facilitator (CDF) transporter (TC 2.A.4) family. As to quaternary structure, forms homodimers via its C-terminal domain (CTD) in the presence of metal cations. Interacts with MamB via their CTD.

It is found in the magnetosome membrane. The protein localises to the cell inner membrane. Its function is as follows. Probably plays a role in biomineralization. Required for stable accumulation of MamB. Probably binds and transports iron. May nucleate iron crystal formation. The polypeptide is Magnetosome protein MamM (mamM) (Paramagnetospirillum magneticum (strain ATCC 700264 / AMB-1) (Magnetospirillum magneticum)).